Reading from the N-terminus, the 578-residue chain is Acyl-CoA synthetase ACTT5 (578 aa).

Residue 211-222 participates in AMP binding; that stretch reads RLTTSGTTGLPK. The tract at residues 472-551 is AMP-binding; it reads ELEAALLQAK…DEIPRSPTGK (80 aa).

This sequence belongs to the ATP-dependent AMP-binding enzyme family.

Its pathway is mycotoxin biosynthesis. Functionally, acyl-CoA synthetase; part of the gene clusters that mediate the biosynthesis of the host-selective toxins (HSTs) ACT-toxins responsible for brown spot of tangerine disease by the tangerine pathotype which affects tangerines and mandarins. ACT-toxins consist of three moieties, 9,10-epoxy-8-hydroxy-9-methyl-decatrienoic acid (EDA), valine and a polyketide. ACT-toxin I is toxic to both citrus and pear; toxin II the 5''-deoxy derivative of ACT-toxin I, is highly toxic to pear and slightly toxic to citrus. On cellular level, ACT-toxins affect plasma membrane of susceptible cells and cause a sudden increase in loss of K(+) after a few minutes of toxin treatment. The acyl-CoA ligase ACTT1, the hydrolase ACTT2, the enoyl-CoA hydratases ACTT3 and ACTT6, and the acyl-CoA synthetase ACTT5 are all involved in the biosynthesis of the AK-, AF- and ACT-toxin common 9,10-epoxy-8-hydroxy-9-methyl-decatrienoic acid (EDA) structural moiety. The exact role of each enzyme, and of additional enzymes identified within the AF-toxin clusters have still to be determined. On the other hand, ACTTS1 to ACTTS4 are specific to the tangerine pathotype. The function of ACTTS3 is to elongate the polyketide chain portion of ACT-toxin that is unique to this toxin. The enoyl-reductase ACTTS2 might complement the missing enoyl-reductase (ER) domain in ACTTS3 in the synthesis of the polyketide portion of ACT-toxin. The roles of the nonribosomal peptide synthetases-related proteins ACTTS1 and ACTTS4 have also still not been elucidated. This chain is Acyl-CoA synthetase ACTT5, found in Alternaria alternata (Alternaria rot fungus).